The sequence spans 155 residues: SsrA-binding protein (155 aa).

The protein belongs to the SmpB family.

Its subcellular location is the cytoplasm. Required for rescue of stalled ribosomes mediated by trans-translation. Binds to transfer-messenger RNA (tmRNA), required for stable association of tmRNA with ribosomes. tmRNA and SmpB together mimic tRNA shape, replacing the anticodon stem-loop with SmpB. tmRNA is encoded by the ssrA gene; the 2 termini fold to resemble tRNA(Ala) and it encodes a 'tag peptide', a short internal open reading frame. During trans-translation Ala-aminoacylated tmRNA acts like a tRNA, entering the A-site of stalled ribosomes, displacing the stalled mRNA. The ribosome then switches to translate the ORF on the tmRNA; the nascent peptide is terminated with the 'tag peptide' encoded by the tmRNA and targeted for degradation. The ribosome is freed to recommence translation, which seems to be the essential function of trans-translation. This chain is SsrA-binding protein, found in Oenococcus oeni (strain ATCC BAA-331 / PSU-1).